We begin with the raw amino-acid sequence, 456 residues long: Sulfoacetaldehyde dehydrogenase (456 aa).

213–218 is an NAD(+) binding site; sequence GGTAAA. Residues E233 and C267 contribute to the active site.

This sequence belongs to the aldehyde dehydrogenase family. As to quaternary structure, homotetramer.

It carries out the reaction sulfoacetaldehyde + NAD(+) + H2O = sulfoacetate + NADH + 2 H(+). Mediates conversion of 2-sulfoacetaldehyde into sulfoacetate. The enzyme is specific for NAD; NADP is not a substrate. Part of a pathway that can utilize the amino group of taurine as a sole source of nitrogen for growth. The protein is Sulfoacetaldehyde dehydrogenase (safD) of Neptuniibacter caesariensis.